The sequence spans 353 residues: MIVNLSRLGKSGTGMWQYSIKFLTALREIADVDAIICSKVHADYFEKLGYAVVTVPNIVSNTSKTSRLRPLVWYVYSYWLALRVLIKFGNKKLVCTTHHTIPLLRNQTITVHDIRPFYYPDSFIQKVYFRFLLKMSVKRCKHVLTVSYTVKDSIAKTYNVDSEKISVIYNSVNKSDFIQKKEKENYFLAVGASWPHKNIHSFIKNKKVWSDSYNLIIVCGRTDYAMSLQQMVVDLELKDKVTFLHEVSFNELKILYSKAYALVYPSIDEGFGIPPIEAMASNTPVIVSDIPVFHEVLTNGALYVNPDDEKSWQSAIKNIEQLPDAISRFNNYVARYDFDNMKQMVGNWLAESK.

Belongs to the glycosyltransferase group 1 family. Glycosyltransferase 4 subfamily.

It carries out the reaction alpha-L-rhamnosyl-(1-&gt;3)-alpha-D-galactosyl-1-diphospho-di-trans,octa-cis-undecaprenol + GDP-alpha-D-mannose = alpha-D-Man-(1-&gt;4)-alpha-L-Rha-(1-&gt;3)-alpha-D-Gal-di-trans,octa-cis-undecaprenyl diphosphate + GDP + H(+). The protein operates within bacterial outer membrane biogenesis; LPS O-antigen biosynthesis. Its function is as follows. Mannosyltransferase involved in the biosynthesis of the repeat unit of the lipopolysaccharide (LPS) O-antigen region. Catalyzes the addition of a mannose to the rhamnosyl-galactosyl-undecaprenyl diphosphate intermediate. The polypeptide is O-antigen chain mannosyltransferase RfbU (Salmonella typhimurium (strain LT2 / SGSC1412 / ATCC 700720)).